Here is a 166-residue protein sequence, read N- to C-terminus: Phospholipase A2 inhibitor clone 06/08 (166 aa).

The first 19 residues, 1–19, serve as a signal peptide directing secretion; it reads MRLILLSGLLLLGIFLANG. Residues 46–161 form the C-type lectin domain; that stretch reads LRGAFLTVYK…CDDNLLVVCE (116 aa). Asn61 and Asn122 each carry an N-linked (GlcNAc...) asparagine glycan. Cystine bridges form between Cys83-Cys160 and Cys138-Cys152.

Belongs to the alpha-type phospholipase A2 inhibitor family. As to quaternary structure, homotrimer; non-covalently linked. In terms of tissue distribution, expressed by the liver.

The protein resides in the secreted. In terms of biological role, this phospholipase A2 inhibitor binds directly phospholipase A2 in the presence or absence of calcium. The polypeptide is Phospholipase A2 inhibitor clone 06/08 (Bothrops neuwiedi (Neuwied's lancehead)).